The sequence spans 289 residues: MIDFTTWWQHLPSQMNPVIFSIDGIAIRWYGTMYIVAFAIVYLLSKYRISNEKLPFDKTFPGDALTWAMGGVLIGGRIGYILFYGFDWFLQDPVGTLIPIKFGNGSCAFSGINGMSFHGGLIGVAIALWLFTRTHKVDFLKTVDLFIPALPLGYTFGRLGNFINGELYGRVTTSAIGMYFPAAPTVALRHPSQLYEAFFEGIVLFIILWTIRKKAPWPGYLSGLYLIGYGTVRFFIEFFREPDAQLGFVFLNFSMGQVLCFLMIAAGIGILVWSKQRAENADVMMGGKR.

3 helical membrane passes run 24 to 44 (GIAIRWYGTMYIVAFAIVYLL), 70 to 90 (GGVLIGGRIGYILFYGFDWFL), and 111 to 131 (GINGMSFHGGLIGVAIALWLF). A 1,2-diacyl-sn-glycero-3-phospho-(1'-sn-glycerol) is bound at residue Arg158. The next 2 membrane-spanning stretches (helical) occupy residues 219–239 (GYLSGLYLIGYGTVRFFIEFF) and 253–273 (FSMGQVLCFLMIAAGIGILVW).

This sequence belongs to the Lgt family.

Its subcellular location is the cell inner membrane. The enzyme catalyses L-cysteinyl-[prolipoprotein] + a 1,2-diacyl-sn-glycero-3-phospho-(1'-sn-glycerol) = an S-1,2-diacyl-sn-glyceryl-L-cysteinyl-[prolipoprotein] + sn-glycerol 1-phosphate + H(+). It participates in protein modification; lipoprotein biosynthesis (diacylglyceryl transfer). In terms of biological role, catalyzes the transfer of the diacylglyceryl group from phosphatidylglycerol to the sulfhydryl group of the N-terminal cysteine of a prolipoprotein, the first step in the formation of mature lipoproteins. The polypeptide is Phosphatidylglycerol--prolipoprotein diacylglyceryl transferase (Chlorobaculum tepidum (strain ATCC 49652 / DSM 12025 / NBRC 103806 / TLS) (Chlorobium tepidum)).